The chain runs to 217 residues: Probable septum site-determining protein MinC (217 aa).

Belongs to the MinC family. Interacts with MinD and FtsZ.

In terms of biological role, cell division inhibitor that blocks the formation of polar Z ring septums. Rapidly oscillates between the poles of the cell to destabilize FtsZ filaments that have formed before they mature into polar Z rings. Prevents FtsZ polymerization. The chain is Probable septum site-determining protein MinC from Pelotomaculum thermopropionicum (strain DSM 13744 / JCM 10971 / SI).